The primary structure comprises 86 residues: MENFDKTMKFDYEELPTQDVRDVLNNVYRTLDERGYNAVNQIVGYLLSGDPAYIPRQNEARNQIRHIDRDVIMEELVSYYLKEQNK.

Belongs to the UPF0297 family.

In Staphylococcus aureus (strain Mu3 / ATCC 700698), this protein is UPF0297 protein SAHV_1604.